The chain runs to 281 residues: CCAAT/enhancer-binding protein epsilon (281 aa).

The segment at 1-30 is disordered; the sequence is MSHGTYYECEPRAGQQPLEFSGARAGPGEL. Lysine 121 is covalently cross-linked (Glycyl lysine isopeptide (Lys-Gly) (interchain with G-Cter in SUMO2)). Position 181 is a phosphoserine (serine 181). Residues 204 to 267 form the bZIP domain; the sequence is SLEYRLRRER…DTLRNLFRQI (64 aa). The segment at 208 to 228 is basic motif; the sequence is RLRRERNNIAVRKSRDKAKRR. The tract at residues 230 to 237 is leucine-zipper; sequence LETQQKVL.

Belongs to the bZIP family. C/EBP subfamily. In terms of assembly, binds DNA as a homodimer and as a heterodimer. Can form stable heterodimers with CEBPA, CEBPB and CEBPD. Interacts with GATA1 and SPI1. Interacts with SMARCD2. In terms of processing, phosphorylated.

Its subcellular location is the nucleus. Its function is as follows. Transcriptional activator. C/EBP are DNA-binding proteins that recognize two different motifs: the CCAAT homology common to many promoters and the enhanced core homology common to many enhancers. Required for the promyelocyte-myelocyte transition in myeloid differentiation. The protein is CCAAT/enhancer-binding protein epsilon (CEBPE) of Ovis aries (Sheep).